A 598-amino-acid polypeptide reads, in one-letter code: Nicotinamide riboside transporter 1 (598 aa).

The next 11 helical transmembrane spans lie at 48 to 68 (LAYW…SAAL), 71 to 91 (GLSY…TIIF), 112 to 132 (FVFG…MSIV), 174 to 194 (LVGF…KPYH), 197 to 217 (YLLI…VIYL), 241 to 261 (AWAW…GSTN), 273 to 293 (LAIW…VPIF), 372 to 392 (GALF…YNSS), 395 to 415 (FLTV…VMIC), 447 to 467 (AIVA…WEVN), and 484 to 504 (SFFS…FFPF). Phosphoserine occurs at positions 560 and 572.

The protein belongs to the purine-cytosine permease (2.A.39) family.

It is found in the cell membrane. In terms of biological role, high-affinity pH-dependent nicotinamide riboside transporter which also transports thiamine with low affinity. Involved in 5-fluorocytosine sensitivity. The polypeptide is Nicotinamide riboside transporter 1 (NRT1) (Saccharomyces cerevisiae (strain ATCC 204508 / S288c) (Baker's yeast)).